Consider the following 95-residue polypeptide: Signal recognition particle 19 kDa protein (95 aa).

The protein belongs to the SRP19 family. Part of the signal recognition particle protein translocation system, which is composed of SRP and FtsY. Archaeal SRP consists of a 7S RNA molecule of 300 nucleotides and two protein subunits: SRP54 and SRP19.

Its subcellular location is the cytoplasm. In terms of biological role, involved in targeting and insertion of nascent membrane proteins into the cytoplasmic membrane. Binds directly to 7S RNA and mediates binding of the 54 kDa subunit of the SRP. The chain is Signal recognition particle 19 kDa protein from Pyrobaculum islandicum (strain DSM 4184 / JCM 9189 / GEO3).